The following is a 404-amino-acid chain: Cysteine desulfurase IscS (404 aa).

Pyridoxal 5'-phosphate is bound by residues 75–76, asparagine 155, glutamine 183, and 203–205; these read AT and SGH. Lysine 206 is modified (N6-(pyridoxal phosphate)lysine). Threonine 243 is a binding site for pyridoxal 5'-phosphate. Cysteine 328 functions as the Cysteine persulfide intermediate in the catalytic mechanism. Position 328 (cysteine 328) interacts with [2Fe-2S] cluster.

The protein belongs to the class-V pyridoxal-phosphate-dependent aminotransferase family. NifS/IscS subfamily. Homodimer. Forms a heterotetramer with IscU, interacts with other sulfur acceptors. Pyridoxal 5'-phosphate serves as cofactor.

It is found in the cytoplasm. The enzyme catalyses (sulfur carrier)-H + L-cysteine = (sulfur carrier)-SH + L-alanine. The protein operates within cofactor biosynthesis; iron-sulfur cluster biosynthesis. Functionally, master enzyme that delivers sulfur to a number of partners involved in Fe-S cluster assembly, tRNA modification or cofactor biosynthesis. Catalyzes the removal of elemental sulfur atoms from cysteine to produce alanine. Functions as a sulfur delivery protein for Fe-S cluster synthesis onto IscU, an Fe-S scaffold assembly protein, as well as other S acceptor proteins. In Klebsiella pneumoniae subsp. pneumoniae (strain ATCC 700721 / MGH 78578), this protein is Cysteine desulfurase IscS.